Consider the following 215-residue polypeptide: MGKVYDRFEERLEIQAIADDITSKYVPPHVNIFYCLGGITLTCFLVQVATGFAMTFYYRPTVTEAFASVQYLMTEVNFGWLIRSIHRWSASMMVLMMILHVFRVYLTGGFKKPRELTWVTGVILAVLTVSFGVTGYSLPWDQIGYWAVKIVTGVPEAIPVIGSPLVELLRGSVSVGQSTLTRFYSLHTFILPLLTAVFMPMHFLMIRKQGIPGPL.

The chain crosses the membrane as a helical span at residues 32–52; sequence IFYCLGGITLTCFLVQVATGF. Cys-35 contributes to the heme c binding site. 2 residues coordinate heme b: His-86 and His-100. Helical transmembrane passes span 90–110, 116–136, and 186–206; these read ASMMVLMMILHVFRVYLTGGF, LTWVTGVILAVLTVSFGVTGY, and LHTFILPLLTAVFMPMHFLMI. The heme b site is built by His-187 and His-202.

Belongs to the cytochrome b family. PetB subfamily. As to quaternary structure, the 4 large subunits of the cytochrome b6-f complex are cytochrome b6, subunit IV (17 kDa polypeptide, PetD), cytochrome f and the Rieske protein, while the 4 small subunits are PetG, PetL, PetM and PetN. The complex functions as a dimer. It depends on heme b as a cofactor. Requires heme c as cofactor.

The protein resides in the plastid. The protein localises to the chloroplast thylakoid membrane. Functionally, component of the cytochrome b6-f complex, which mediates electron transfer between photosystem II (PSII) and photosystem I (PSI), cyclic electron flow around PSI, and state transitions. This is Cytochrome b6 from Pinus thunbergii (Japanese black pine).